Consider the following 194-residue polypeptide: Ribonuclease HII (194 aa).

In terms of domain architecture, RNase H type-2 spans 3 to 193; sequence ILTAGVDEAG…VRNLLAQQTL (191 aa). The a divalent metal cation site is built by Asp9, Glu10, and Asp101.

This sequence belongs to the RNase HII family. Requires Mn(2+) as cofactor. The cofactor is Mg(2+).

It is found in the cytoplasm. The catalysed reaction is Endonucleolytic cleavage to 5'-phosphomonoester.. Functionally, endonuclease that specifically degrades the RNA of RNA-DNA hybrids. The chain is Ribonuclease HII from Neisseria meningitidis serogroup C (strain 053442).